An 89-amino-acid polypeptide reads, in one-letter code: MKTLLLTLVVVTIVCLDLGDSLICYLDFSVPHTCAPGEKLCYTRTWNDGRGTRIERGCAATCPIPKKPEIHVTCCSTDRCNPHPKQKPH.

Positions methionine 1–serine 21 are cleaved as a signal peptide. Disulfide bonds link cysteine 24/cysteine 41, cysteine 34/cysteine 58, cysteine 62/cysteine 74, and cysteine 75/cysteine 80.

It belongs to the three-finger toxin family. Long-chain subfamily. Type II alpha-neurotoxin sub-subfamily. In terms of tissue distribution, expressed by the venom gland.

It localises to the secreted. Functionally, binds with high affinity to muscular (alpha-1/CHRNA1) and neuronal (alpha-7/CHRNA7) nicotinic acetylcholine receptor (nAChR) and inhibits acetylcholine from binding to the receptor, thereby impairing neuromuscular and neuronal transmission. This Pseudonaja textilis (Eastern brown snake) protein is Long neurotoxin 1.